The sequence spans 179 residues: Inner membrane-spanning protein YciB (179 aa).

5 consecutive transmembrane segments (helical) span residues 22–42, 50–70, 76–96, 121–141, and 149–169; these read IYAA…YSWV, MALI…FFHN, WKVT…QWVM, LAWA…AFWL, and FKVF…GIYI.

It belongs to the YciB family.

It is found in the cell inner membrane. In terms of biological role, plays a role in cell envelope biogenesis, maintenance of cell envelope integrity and membrane homeostasis. This is Inner membrane-spanning protein YciB from Klebsiella pneumoniae subsp. pneumoniae (strain ATCC 700721 / MGH 78578).